The following is a 143-amino-acid chain: Large ribosomal subunit protein uL11 (143 aa).

The protein belongs to the universal ribosomal protein uL11 family. In terms of assembly, part of the ribosomal stalk of the 50S ribosomal subunit. Interacts with L10 and the large rRNA to form the base of the stalk. L10 forms an elongated spine to which L12 dimers bind in a sequential fashion forming a multimeric L10(L12)X complex. Post-translationally, one or more lysine residues are methylated.

Forms part of the ribosomal stalk which helps the ribosome interact with GTP-bound translation factors. The sequence is that of Large ribosomal subunit protein uL11 from Rhizobium etli (strain ATCC 51251 / DSM 11541 / JCM 21823 / NBRC 15573 / CFN 42).